Reading from the N-terminus, the 475-residue chain is MHFETVIGLEVHVELKTESKMFSASPAHFGAEPNTNVNVVDLGYPGVLPVVNKTAVDWAMRAAMALNMDIRTETKFDRKNYFYPDNPKAYQISQFDEPIGENGYIDIEVNGETKRIGITRLHMEEDAGKLTHKDGYSLVDLNRQGTPLVEIVSEPDIRTPEEAYAYLEKLKAIIQYTGVSDVRMEEGSLRCDANISLRPVGQEKFGTKAELKNLNSFSFVKKGLEHEVKRQEEVLLNGGEILQETRRFDESTGKTILMRVKEGSDDYRYFPEPDLVPLYIDEAWKERVRASIPELPDVRKAKYVSEYGLPEYDAHVLTLTKEMSDFFEAMIALDADAKLSSNWLMGGVNEYLNKNQKELHETALTPENLSEMVKLLADGTISSKIAKKVFADTVETGKAPKVIMEEQGLVQISDPEQLKAFVTEALDNNPQSIEDFKNGKGKATGFLVGQIMKISKGQANPQLVNKILREELEKR.

This sequence belongs to the GatB/GatE family. GatB subfamily. In terms of assembly, heterotrimer of A, B and C subunits.

The catalysed reaction is L-glutamyl-tRNA(Gln) + L-glutamine + ATP + H2O = L-glutaminyl-tRNA(Gln) + L-glutamate + ADP + phosphate + H(+). It catalyses the reaction L-aspartyl-tRNA(Asn) + L-glutamine + ATP + H2O = L-asparaginyl-tRNA(Asn) + L-glutamate + ADP + phosphate + 2 H(+). Functionally, allows the formation of correctly charged Asn-tRNA(Asn) or Gln-tRNA(Gln) through the transamidation of misacylated Asp-tRNA(Asn) or Glu-tRNA(Gln) in organisms which lack either or both of asparaginyl-tRNA or glutaminyl-tRNA synthetases. The reaction takes place in the presence of glutamine and ATP through an activated phospho-Asp-tRNA(Asn) or phospho-Glu-tRNA(Gln). The protein is Aspartyl/glutamyl-tRNA(Asn/Gln) amidotransferase subunit B of Macrococcus caseolyticus (strain JCSC5402) (Macrococcoides caseolyticum).